A 123-amino-acid chain; its full sequence is UPF0426 protein At1g28150, chloroplastic (123 aa).

The N-terminal 26 residues, 1-26 (MGFVLICTCPPSSGVVVSQLHHHQFS), are a transit peptide targeting the chloroplast. Residues 97-123 (SGITEEEVDADGVVSNDEDSPQQIEIE) are disordered. The segment covering 100–123 (TEEEVDADGVVSNDEDSPQQIEIE) has biased composition (acidic residues).

The protein belongs to the UPF0426 family.

It localises to the plastid. The protein localises to the chloroplast. It is found in the plastoglobule. The chain is UPF0426 protein At1g28150, chloroplastic from Arabidopsis thaliana (Mouse-ear cress).